A 227-amino-acid polypeptide reads, in one-letter code: Paired immunoglobulin-like type 2 receptor beta (227 aa).

A signal peptide spans 1–19; the sequence is MGRPLLLPLLLLLQPPAFL. Topologically, residues 20-191 are extracellular; sequence QPGGSTGSGP…WHLSLDTAIR (172 aa). The Ig-like V-type domain maps to 21–143; sequence PGGSTGSGPS…SGRQQLQSIK (123 aa). N-linked (GlcNAc...) asparagine glycosylation is present at asparagine 100. A helical membrane pass occupies residues 192-212; it reads VALAVAVLKTVILGLLCLLLL. Residues 213–227 lie on the Cytoplasmic side of the membrane; it reads WWRRRKGSRAPSSDF.

It localises to the membrane. In terms of biological role, paired receptors consist of highly related activating and inhibitory receptors and are widely involved in the regulation of the immune system. PILRB is thought to act as a cellular signaling activating receptor that associates with ITAM-bearing adapter molecules on the cell surface. This is Paired immunoglobulin-like type 2 receptor beta (PILRB) from Homo sapiens (Human).